A 94-amino-acid polypeptide reads, in one-letter code: uncharacterized protein (94 aa).

This is an uncharacterized protein from Homo sapiens (Human).